Reading from the N-terminus, the 121-residue chain is Methylglyoxal synthase (121 aa).

An MGS-like domain is found at 1 to 121 (MMKVALIAHD…SAELFLRALN (121 aa)). Residues His-9, Lys-13, 35–38 (TGTT), and 55–56 (SG) contribute to the substrate site. Asp-61 (proton donor/acceptor) is an active-site residue. His-88 is a binding site for substrate.

Belongs to the methylglyoxal synthase family.

It carries out the reaction dihydroxyacetone phosphate = methylglyoxal + phosphate. Its function is as follows. Catalyzes the formation of methylglyoxal from dihydroxyacetone phosphate. This Carboxydothermus hydrogenoformans (strain ATCC BAA-161 / DSM 6008 / Z-2901) protein is Methylglyoxal synthase.